A 438-amino-acid polypeptide reads, in one-letter code: Serine hydroxymethyltransferase 1 (438 aa).

Residues Leu-130 and 134 to 136 (GHL) each bind (6S)-5,6,7,8-tetrahydrofolate. An N6-(pyridoxal phosphate)lysine modification is found at Lys-239.

It belongs to the SHMT family. In terms of assembly, homodimer. The cofactor is pyridoxal 5'-phosphate.

The protein resides in the cytoplasm. It catalyses the reaction (6R)-5,10-methylene-5,6,7,8-tetrahydrofolate + glycine + H2O = (6S)-5,6,7,8-tetrahydrofolate + L-serine. It participates in one-carbon metabolism; tetrahydrofolate interconversion. The protein operates within amino-acid biosynthesis; glycine biosynthesis; glycine from L-serine: step 1/1. In terms of biological role, catalyzes the reversible interconversion of serine and glycine with tetrahydrofolate (THF) serving as the one-carbon carrier. This reaction serves as the major source of one-carbon groups required for the biosynthesis of purines, thymidylate, methionine, and other important biomolecules. Also exhibits THF-independent aldolase activity toward beta-hydroxyamino acids, producing glycine and aldehydes, via a retro-aldol mechanism. This is Serine hydroxymethyltransferase 1 from Mycobacterium tuberculosis (strain CDC 1551 / Oshkosh).